The sequence spans 401 residues: Chromate transport protein (401 aa).

12 helical membrane passes run 26-46 (LVMY…ALAG), 67-87 (GLAL…IYLG), 93-113 (IVGA…MVLA), 124-144 (LTWM…IIAI), 172-192 (VITE…VWFW), 214-234 (AASG…GVFF), 237-257 (AGAF…GGVV), 272-294 (VAVA…YLVA), 299-321 (ACVA…APYF), 330-350 (ILAF…GAVI), 356-376 (SIVD…LLKF), and 379-399 (LSEP…YPLL).

Belongs to the chromate ion transporter (CHR) (TC 2.A.51) family.

It is found in the cell inner membrane. This protein reduces chromate accumulation and is essential for chromate resistance. The sequence is that of Chromate transport protein from Cupriavidus metallidurans (strain ATCC 43123 / DSM 2839 / NBRC 102507 / CH34) (Ralstonia metallidurans).